Here is a 213-residue protein sequence, read N- to C-terminus: 3-demethoxyubiquinol 3-hydroxylase (213 aa).

Fe cation-binding residues include glutamate 62, glutamate 92, histidine 95, glutamate 144, glutamate 176, and histidine 179.

It belongs to the COQ7 family. Fe cation is required as a cofactor.

It localises to the cell membrane. The enzyme catalyses a 5-methoxy-2-methyl-3-(all-trans-polyprenyl)benzene-1,4-diol + AH2 + O2 = a 3-demethylubiquinol + A + H2O. Its pathway is cofactor biosynthesis; ubiquinone biosynthesis. Its function is as follows. Catalyzes the hydroxylation of 2-nonaprenyl-3-methyl-6-methoxy-1,4-benzoquinol during ubiquinone biosynthesis. The sequence is that of 3-demethoxyubiquinol 3-hydroxylase from Psychrobacter sp. (strain PRwf-1).